Here is a 533-residue protein sequence, read N- to C-terminus: Zinc finger protein 26 (533 aa).

Positions 14–85 constitute a KRAB domain; the sequence is LSFKDISMEF…NAKISRQSCP (72 aa). 13 C2H2-type zinc fingers span residues 174–196, 202–224, 230–252, 258–280, 286–308, 314–336, 342–364, 370–392, 398–420, 426–448, 454–476, 482–504, and 510–532; these read CVCS…LRIH, YECS…QRVH, YSCS…QEIH, YGCS…QRSH, YECS…QRTH, HKCS…IRMH, YQCS…QGVH, YQCG…LRAH, YGCS…RRTH, YECN…QKTH, FKCS…QRVH, and WKCS…RKTH.

Belongs to the krueppel C2H2-type zinc-finger protein family.

Its subcellular location is the nucleus. May be involved in transcriptional regulation. This is Zinc finger protein 26 (ZNF26) from Homo sapiens (Human).